The following is a 223-amino-acid chain: DNA mismatch repair protein MutH (223 aa).

The protein belongs to the MutH family.

It is found in the cytoplasm. Functionally, sequence-specific endonuclease that cleaves unmethylated GATC sequences. It is involved in DNA mismatch repair. The sequence is that of DNA mismatch repair protein MutH from Shewanella oneidensis (strain ATCC 700550 / JCM 31522 / CIP 106686 / LMG 19005 / NCIMB 14063 / MR-1).